We begin with the raw amino-acid sequence, 643 residues long: Arginine--tRNA ligase, mitochondrial (643 aa).

A 'HIGH' region motif is present at residues 188–198; the sequence is PNIAKPFHAGH.

This sequence belongs to the class-I aminoacyl-tRNA synthetase family.

It is found in the mitochondrion matrix. It carries out the reaction tRNA(Arg) + L-arginine + ATP = L-arginyl-tRNA(Arg) + AMP + diphosphate. The polypeptide is Arginine--tRNA ligase, mitochondrial (MSR1) (Saccharomyces cerevisiae (strain ATCC 204508 / S288c) (Baker's yeast)).